Here is a 207-residue protein sequence, read N- to C-terminus: Outer-membrane lipoprotein LolB (207 aa).

An N-terminal signal peptide occupies residues Met1–Gly23. Cys24 carries the N-palmitoyl cysteine lipid modification. Residue Cys24 is the site of S-diacylglycerol cysteine attachment.

This sequence belongs to the LolB family. Monomer.

Its subcellular location is the cell outer membrane. In terms of biological role, plays a critical role in the incorporation of lipoproteins in the outer membrane after they are released by the LolA protein. The chain is Outer-membrane lipoprotein LolB from Shewanella amazonensis (strain ATCC BAA-1098 / SB2B).